A 610-amino-acid polypeptide reads, in one-letter code: Glutamine--fructose-6-phosphate aminotransferase [isomerizing] (610 aa).

The active-site Nucleophile; for GATase activity is C2. Residues 2–218 (CGIVGAVAQR…EGDVAEITRR (217 aa)) enclose the Glutamine amidotransferase type-2 domain. SIS domains are found at residues 286–426 (AAEI…QQGR) and 459–600 (LATD…VDQP). The active-site For Fru-6P isomerization activity is K605.

As to quaternary structure, homodimer.

It localises to the cytoplasm. The catalysed reaction is D-fructose 6-phosphate + L-glutamine = D-glucosamine 6-phosphate + L-glutamate. In terms of biological role, catalyzes the first step in hexosamine metabolism, converting fructose-6P into glucosamine-6P using glutamine as a nitrogen source. The polypeptide is Glutamine--fructose-6-phosphate aminotransferase [isomerizing] (Vibrio vulnificus (strain YJ016)).